Here is a 468-residue protein sequence, read N- to C-terminus: Peroxisome proliferator-activated receptor alpha (468 aa).

The segment at residues 99–173 (NIECRICGDK…VGMSHNAIRF (75 aa)) is a DNA-binding region (nuclear receptor). 2 NR C4-type zinc fingers span residues 102-122 (CRIC…CEGC) and 139-161 (CDRS…FHKC). Positions 239–466 (FVIHDMETLC…HPLLQEIYRD (228 aa)) constitute an NR LBD domain. Residues 304–433 (DQVTLLKYGV…PKLLQKMVDL (130 aa)) form a required for heterodimerization with RXRA region.

It belongs to the nuclear hormone receptor family. NR1 subfamily. As to quaternary structure, heterodimer; with RXRA. This heterodimerization is required for DNA binding and transactivation activity. Interacts with NCOA3 coactivator. Interacts with CITED2; the interaction stimulates its transcriptional activity. Also interacts with PPARBP in vitro. Interacts with AKAP13, LPIN1, PRDM16 and coactivator NCOA6. Interacts with ASXL1 and ASXL2. Interacts with PER2. Interacts with SIRT1; the interaction seems to be modulated by NAD(+) levels. Interacts with CRY1 and CRY2. In hepatocytes, interacts with PAQR3 and HUWE1; the interactions promote PPARA poylubiquitination and HUWE1-mediated degradation. Phosphorylated. Post-translationally, ubiquitinated by E3 ubiquitin-protein ligase HUWE1; leading to proteasomal degradation. Expressed predominantly in liver and kidney.

The protein resides in the nucleus. Its function is as follows. Ligand-activated transcription factor. Key regulator of lipid metabolism. Activated by the endogenous ligand 1-palmitoyl-2-oleoyl-sn-glycerol-3-phosphocholine (16:0/18:1-GPC). Activated by oleylethanolamide, a naturally occurring lipid that regulates satiety. Receptor for peroxisome proliferators such as hypolipidemic drugs and fatty acids. Regulates the peroxisomal beta-oxidation pathway of fatty acids. Functions as a transcription activator for the ACOX1 and P450 genes. Transactivation activity requires heterodimerization with RXRA and is antagonized by NR2C2. May be required for the propagation of clock information to metabolic pathways regulated by PER2. This chain is Peroxisome proliferator-activated receptor alpha (Ppara), found in Rattus norvegicus (Rat).